A 173-amino-acid polypeptide reads, in one-letter code: Bifunctional protein PyrR (173 aa).

Residues Val-93 to Thr-105 carry the PRPP-binding motif.

Belongs to the purine/pyrimidine phosphoribosyltransferase family. PyrR subfamily. In terms of assembly, homodimer and homohexamer; in equilibrium.

The enzyme catalyses UMP + diphosphate = 5-phospho-alpha-D-ribose 1-diphosphate + uracil. Its function is as follows. Regulates transcriptional attenuation of the pyrimidine nucleotide (pyr) operon by binding in a uridine-dependent manner to specific sites on pyr mRNA. This disrupts an antiterminator hairpin in the RNA and favors formation of a downstream transcription terminator, leading to a reduced expression of downstream genes. Also displays a weak uracil phosphoribosyltransferase activity which is not physiologically significant. The sequence is that of Bifunctional protein PyrR from Streptococcus pyogenes serotype M12 (strain MGAS2096).